We begin with the raw amino-acid sequence, 190 residues long: UPF0398 protein LAR_0869 (190 aa).

The protein belongs to the UPF0398 family.

This chain is UPF0398 protein LAR_0869, found in Limosilactobacillus reuteri subsp. reuteri (strain JCM 1112) (Lactobacillus reuteri).